The following is a 446-amino-acid chain: Exodeoxyribonuclease 7 large subunit (446 aa).

This sequence belongs to the XseA family. As to quaternary structure, heterooligomer composed of large and small subunits.

The protein localises to the cytoplasm. The catalysed reaction is Exonucleolytic cleavage in either 5'- to 3'- or 3'- to 5'-direction to yield nucleoside 5'-phosphates.. Bidirectionally degrades single-stranded DNA into large acid-insoluble oligonucleotides, which are then degraded further into small acid-soluble oligonucleotides. The polypeptide is Exodeoxyribonuclease 7 large subunit (Streptococcus pneumoniae (strain ATCC 700669 / Spain 23F-1)).